We begin with the raw amino-acid sequence, 359 residues long: MNLNPPTSALQIEGKGSHIMARNVSCFLVRHTPHPRRVCHIKGLNNIPICTVNDDENAFGTLWGVGQSNYLEKNRIPFANCSYPSSTAVQESPVRGMSPAPNGAKVPPRPHSEPSRKIKECFKTSSENPLVIKKEEIKAKRPPSPPKACSTPGSCSSGMTSTKNDVKANTICIPNYLDQEIKILAKLCSILHTDSLAEVLQWLLHATSKEKEWVSALIHSELAEINLLTHHRRNTSMEPAAETGKPPTVKSPPTVKLPPNFTAKSKVLTRDTEGDQPTRVSSQGSEENKEVPKEAEHKPPLLIRRNNMKIPVAEYFSKPNSPPRPNTQESGSAKPVSARSIQEYNLCPQRACYPSTHRR.

Disordered stretches follow at residues 90–117, 132–161, and 235–359; these read QESPVRGMSPAPNGAKVPPRPHSEPSRK, IKKEEIKAKRPPSPPKACSTPGSCSSGMTS, and TSME…THRR. A compositionally biased stretch (polar residues) spans 151–161; it reads TPGSCSSGMTS. Over residues 245–259 the composition is skewed to low complexity; it reads KPPTVKSPPTVKLPP. Basic and acidic residues predominate over residues 286–299; the sequence is EENKEVPKEAEHKP.

This is an uncharacterized protein from Homo sapiens (Human).